We begin with the raw amino-acid sequence, 144 residues long: Virulence protein STM3117 (144 aa).

Residues 23–143 (RIDHLVLTVS…DGNLIEISQY (121 aa)) enclose the VOC domain.

Functionally, is critically involved in promoting the replication of S.typhimurium cells inside host macrophages, suggesting a role in the establishment of bacterial colonization within macrophages. May be involved in the biosynthesis and modification of the peptidoglycan layer of the cell wall. The protein is Virulence protein STM3117 of Salmonella typhimurium (strain LT2 / SGSC1412 / ATCC 700720).